Here is a 199-residue protein sequence, read N- to C-terminus: Dephospho-CoA kinase (199 aa).

The 198-residue stretch at 2–199 folds into the DPCK domain; sequence KIAVTGGYSS…FVADRIEKKK (198 aa). 10-15 serves as a coordination point for ATP; the sequence is SSGKSS.

Belongs to the CoaE family.

The protein resides in the cytoplasm. The enzyme catalyses 3'-dephospho-CoA + ATP = ADP + CoA + H(+). It functions in the pathway cofactor biosynthesis; coenzyme A biosynthesis; CoA from (R)-pantothenate: step 5/5. Its function is as follows. Catalyzes the phosphorylation of the 3'-hydroxyl group of dephosphocoenzyme A to form coenzyme A. This Desulfotalea psychrophila (strain LSv54 / DSM 12343) protein is Dephospho-CoA kinase.